The primary structure comprises 367 residues: tRNA-specific 2-thiouridylase MnmA (367 aa).

ATP-binding positions include 10–17 (AMSGGVDS) and Met-36. Cys-106 functions as the Nucleophile in the catalytic mechanism. Cys-106 and Cys-204 form a disulfide bridge. ATP is bound at residue Gly-130. An interaction with tRNA region spans residues 154-156 (KDQ). The Cysteine persulfide intermediate role is filled by Cys-204. The interval 310 to 311 (RY) is interaction with tRNA.

Belongs to the MnmA/TRMU family.

The protein resides in the cytoplasm. The enzyme catalyses S-sulfanyl-L-cysteinyl-[protein] + uridine(34) in tRNA + AH2 + ATP = 2-thiouridine(34) in tRNA + L-cysteinyl-[protein] + A + AMP + diphosphate + H(+). Catalyzes the 2-thiolation of uridine at the wobble position (U34) of tRNA, leading to the formation of s(2)U34. This Desulforamulus reducens (strain ATCC BAA-1160 / DSM 100696 / MI-1) (Desulfotomaculum reducens) protein is tRNA-specific 2-thiouridylase MnmA.